We begin with the raw amino-acid sequence, 1435 residues long: Putative ATP-dependent RNA helicase YLR419W (1435 aa).

Disordered stretches follow at residues 1–57 (MAKK…STAS) and 226–251 (LSSHGGISSSGKDRQERKVASHKNSH). A Phosphoserine modification is found at S9. A compositionally biased stretch (basic and acidic residues) spans 31 to 43 (KGQEPEPEDDKRA). Residues 45 to 57 (QQSNRAKVTSTAS) are compositionally biased toward polar residues. Residues 365 to 406 (PLSTRMIVERLTEIGVSSDEALLALQQNDMNENEAAGFLTRE) form the UBA domain. In terms of domain architecture, RWD spans 430-531 (QELESLESIY…EWLKENISKI (102 aa)). The interval 543–566 (DSKGAINKRNISNGKRSINNSSSR) is disordered. Over residues 551 to 566 (RNISNGKRSINNSSSR) the composition is skewed to polar residues. Positions 614-782 (IDIINKNEVV…FPGLATCHIE (169 aa)) constitute a Helicase ATP-binding domain. 627-634 (GETGSGKS) contacts ATP. Positions 729–732 (DEVH) match the DEAH box motif. Phosphoserine is present on S816. A Helicase C-terminal domain is found at 845–1020 (LLCQVVEYVH…SLYLSVKAMG (176 aa)).

The protein belongs to the DEAD box helicase family. DEAH subfamily.

It is found in the cytoplasm. The catalysed reaction is ATP + H2O = ADP + phosphate + H(+). In terms of biological role, probable ATP-binding RNA helicase. In Saccharomyces cerevisiae (strain ATCC 204508 / S288c) (Baker's yeast), this protein is Putative ATP-dependent RNA helicase YLR419W.